The chain runs to 313 residues: Lactamase-like protein nscB (313 aa).

Zn(2+) contacts are provided by His97, His99, Asp101, and His102. Asp101 functions as the Proton donor/acceptor in the catalytic mechanism.

Belongs to the metallo-beta-lactamase superfamily. The cofactor is Zn(2+).

It functions in the pathway secondary metabolite biosynthesis. Functionally, lactamase-like protein; part of the gene cluster that mediates the biosynthesis of neosartoricin B, a prenylated anthracenone that probably exhibits T-cell antiproliferative activity, suggestive of a physiological role as an immunosuppressive agent. The non-reducing polyketide synthase nscA probably synthesizes and cyclizes the decaketide backbone. The hydrolase nscB then mediates the product release through hydrolysis followed by spontaneous decarboxylation. The prenyltransferase nscD catalyzes the addition of the dimethylallyl group to the aromatic C5. The FAD-dependent monooxygenase nscC is then responsible for the stereospecific hydroxylation at C2. Neosartoricin B can be converted into two additional compounds neosartoricins C and D. Neosartoricin C is a spirocyclic compound that is cyclized through the attack of C3 hydroxyl on C14, followed by dehydration. On the other hand, neosartoricin D is a further cyclized compound in which attack of C2 on C14 in neosartoricin C results in the formation of the acetal-containing dioxabicyclo-octanone ring. Both of these compounds are novel and possibly represent related metabolites of the gene cluster. This Arthroderma gypseum (strain ATCC MYA-4604 / CBS 118893) (Microsporum gypseum) protein is Lactamase-like protein nscB.